We begin with the raw amino-acid sequence, 60 residues long: uncharacterized protein (60 aa).

This is an uncharacterized protein from Dictyostelium discoideum (Social amoeba).